Here is a 344-residue protein sequence, read N- to C-terminus: Selenide, water dikinase (344 aa).

Cysteine 16 is a catalytic residue. Residues lysine 19 and 47–49 (SRD) contribute to the ATP site. Aspartate 50 lines the Mg(2+) pocket. ATP-binding positions include aspartate 67, aspartate 90, and 138–140 (GHS). Residue aspartate 90 participates in Mg(2+) binding. A Mg(2+)-binding site is contributed by aspartate 226.

It belongs to the selenophosphate synthase 1 family. Class I subfamily. In terms of assembly, homodimer. Requires Mg(2+) as cofactor.

It catalyses the reaction hydrogenselenide + ATP + H2O = selenophosphate + AMP + phosphate + 2 H(+). Synthesizes selenophosphate from selenide and ATP. This is Selenide, water dikinase from Pseudomonas aeruginosa (strain ATCC 15692 / DSM 22644 / CIP 104116 / JCM 14847 / LMG 12228 / 1C / PRS 101 / PAO1).